A 238-amino-acid polypeptide reads, in one-letter code: ATP synthase subunit a (238 aa).

5 helical membrane passes run 18–38 (LTLL…VFWA), 76–96 (YSLL…LGLF), 114–134 (NLAF…IEGV), 166–186 (SLAI…GLIV), and 193–213 (VYWW…SVFI).

It belongs to the ATPase A chain family. As to quaternary structure, F-type ATPases have 2 components, CF(1) - the catalytic core - and CF(0) - the membrane proton channel. CF(1) has five subunits: alpha(3), beta(3), gamma(1), delta(1), epsilon(1). CF(0) has three main subunits: a(1), b(2) and c(9-12). The alpha and beta chains form an alternating ring which encloses part of the gamma chain. CF(1) is attached to CF(0) by a central stalk formed by the gamma and epsilon chains, while a peripheral stalk is formed by the delta and b chains.

The protein localises to the cell membrane. Key component of the proton channel; it plays a direct role in the translocation of protons across the membrane. This is ATP synthase subunit a from Streptococcus pyogenes serotype M5 (strain Manfredo).